We begin with the raw amino-acid sequence, 124 residues long: Large ribosomal subunit protein bL12 (124 aa).

Belongs to the bacterial ribosomal protein bL12 family. As to quaternary structure, homodimer. Part of the ribosomal stalk of the 50S ribosomal subunit. Forms a multimeric L10(L12)X complex, where L10 forms an elongated spine to which 2 to 4 L12 dimers bind in a sequential fashion. Binds GTP-bound translation factors.

Forms part of the ribosomal stalk which helps the ribosome interact with GTP-bound translation factors. Is thus essential for accurate translation. The protein is Large ribosomal subunit protein bL12 of Anaeromyxobacter dehalogenans (strain 2CP-C).